The primary structure comprises 420 residues: Phosphoglycerate kinase, cytosolic (420 aa).

Valine 23, aspartate 24, phenylalanine 25, asparagine 26, arginine 39, serine 61, histidine 62, glycine 64, arginine 65, arginine 135, histidine 171, and arginine 172 together coordinate (2R)-3-phosphoglycerate. Positions 217 and 218 each coordinate ADP. Glycine 217 is a binding site for CDP. AMP is bound by residues alanine 218 and lysine 219. Position 218 (alanine 218) interacts with ATP. A Mg(2+)-binding site is contributed by alanine 218. Lysine 219 lines the (2R)-3-phosphoglycerate pocket. Residue aspartate 222 participates in CDP binding. Aspartate 222 is a binding site for Mg(2+). ADP-binding residues include lysine 223 and glycine 241. Lysine 223 contacts AMP. Lysine 223 provides a ligand contact to ATP. Glycine 241 serves as a coordination point for CDP. The AMP site is built by alanine 242 and alanine 314. Alanine 242 and alanine 314 together coordinate ATP. Alanine 314 and asparagine 338 together coordinate ADP. Residues glycine 339 and phenylalanine 344 each contribute to the CDP site. Residues phenylalanine 344, glutamate 345, glutamate 377, and serine 378 each coordinate ADP. Residue glutamate 345 participates in AMP binding. Residues glutamate 345, glutamate 377, and serine 378 each contribute to the ATP site. Residue glutamate 377 coordinates Mg(2+).

It belongs to the phosphoglycerate kinase family. In terms of assembly, monomer. It depends on Mg(2+) as a cofactor.

The protein resides in the cytoplasm. The enzyme catalyses (2R)-3-phosphoglycerate + ATP = (2R)-3-phospho-glyceroyl phosphate + ADP. Its pathway is carbohydrate degradation; glycolysis; pyruvate from D-glyceraldehyde 3-phosphate: step 2/5. The polypeptide is Phosphoglycerate kinase, cytosolic (Trypanosoma brucei brucei).